The primary structure comprises 70 residues: NAD(P)H-quinone oxidoreductase subunit O (70 aa).

This sequence belongs to the complex I NdhO subunit family. NDH-1 can be composed of about 15 different subunits; different subcomplexes with different compositions have been identified which probably have different functions.

The protein resides in the cellular thylakoid membrane. The enzyme catalyses a plastoquinone + NADH + (n+1) H(+)(in) = a plastoquinol + NAD(+) + n H(+)(out). It catalyses the reaction a plastoquinone + NADPH + (n+1) H(+)(in) = a plastoquinol + NADP(+) + n H(+)(out). Functionally, NDH-1 shuttles electrons from an unknown electron donor, via FMN and iron-sulfur (Fe-S) centers, to quinones in the respiratory and/or the photosynthetic chain. The immediate electron acceptor for the enzyme in this species is believed to be plastoquinone. Couples the redox reaction to proton translocation, and thus conserves the redox energy in a proton gradient. Cyanobacterial NDH-1 also plays a role in inorganic carbon-concentration. The polypeptide is NAD(P)H-quinone oxidoreductase subunit O (Nostoc sp. (strain PCC 7120 / SAG 25.82 / UTEX 2576)).